Reading from the N-terminus, the 455-residue chain is La-related protein 6C (455 aa).

Residues 1–20 (MAQMQREEVESVTTEKKRLD) show a composition bias toward basic and acidic residues. The tract at residues 1-29 (MAQMQREEVESVTTEKKRLDGGGGSSGAQ) is disordered. One can recognise an HTH La-type RNA-binding domain in the interval 138–229 (NLLSDDLRLK…KRTSQFTDRD (92 aa)). An RRM domain is found at 236–324 (RTVVAENLPD…KGLRVRLLLR (89 aa)). Disordered stretches follow at residues 348–396 (SYES…YAVG) and 414–455 (SLGS…PNNL).

It localises to the nucleus. In terms of biological role, transcriptional regulator. The chain is La-related protein 6C (LARP6C) from Arabidopsis thaliana (Mouse-ear cress).